A 243-amino-acid chain; its full sequence is Ubiquinone/menaquinone biosynthesis C-methyltransferase UbiE (243 aa).

S-adenosyl-L-methionine contacts are provided by residues Thr-69, Asp-90, and 116-117 (DA).

The protein belongs to the class I-like SAM-binding methyltransferase superfamily. MenG/UbiE family.

The catalysed reaction is a 2-demethylmenaquinol + S-adenosyl-L-methionine = a menaquinol + S-adenosyl-L-homocysteine + H(+). It carries out the reaction a 2-methoxy-6-(all-trans-polyprenyl)benzene-1,4-diol + S-adenosyl-L-methionine = a 5-methoxy-2-methyl-3-(all-trans-polyprenyl)benzene-1,4-diol + S-adenosyl-L-homocysteine + H(+). The protein operates within quinol/quinone metabolism; menaquinone biosynthesis; menaquinol from 1,4-dihydroxy-2-naphthoate: step 2/2. Its pathway is cofactor biosynthesis; ubiquinone biosynthesis. Functionally, methyltransferase required for the conversion of demethylmenaquinol (DMKH2) to menaquinol (MKH2) and the conversion of 2-polyprenyl-6-methoxy-1,4-benzoquinol (DDMQH2) to 2-polyprenyl-3-methyl-6-methoxy-1,4-benzoquinol (DMQH2). In Burkholderia ambifaria (strain MC40-6), this protein is Ubiquinone/menaquinone biosynthesis C-methyltransferase UbiE.